A 278-amino-acid polypeptide reads, in one-letter code: Chitosanase (278 aa).

The first 40 residues, 1–40 (MHSQHRTARIALAVVLTAIPASLATAGVGYASTQASTAVK), serve as a signal peptide directing secretion. Residue Glu-62 is the Proton donor of the active site. Asp-80 (nucleophile) is an active-site residue.

The protein belongs to the glycosyl hydrolase 46 family.

Its subcellular location is the secreted. The enzyme catalyses Endohydrolysis of beta-(1-&gt;4)-linkages between D-glucosamine residues in a partly acetylated chitosan.. Its function is as follows. Aids in the defense against invading fungal pathogens by degrading their cell wall chitosan. This Streptomyces sp. (strain N174) protein is Chitosanase (csn).